Here is a 316-residue protein sequence, read N- to C-terminus: Phospho-N-acetylmuramoyl-pentapeptide-transferase (316 aa).

10 helical membrane passes run 5 to 25, 52 to 72, 76 to 96, 116 to 136, 145 to 165, 172 to 192, 195 to 212, 221 to 241, 244 to 264, and 296 to 316; these read IIFA…FFIP, TMGG…FSPW, LFIL…DDFL, FLLA…EIIV, LANF…NSVN, GLAA…ALFL, VTYG…LGFL, VFMG…VALL, LPLI…SVIL, and VVYS…YSLS.

This sequence belongs to the glycosyltransferase 4 family. MraY subfamily. The cofactor is Mg(2+).

It is found in the cell membrane. The catalysed reaction is UDP-N-acetyl-alpha-D-muramoyl-L-alanyl-gamma-D-glutamyl-meso-2,6-diaminopimeloyl-D-alanyl-D-alanine + di-trans,octa-cis-undecaprenyl phosphate = di-trans,octa-cis-undecaprenyl diphospho-N-acetyl-alpha-D-muramoyl-L-alanyl-D-glutamyl-meso-2,6-diaminopimeloyl-D-alanyl-D-alanine + UMP. The protein operates within cell wall biogenesis; peptidoglycan biosynthesis. In terms of biological role, catalyzes the initial step of the lipid cycle reactions in the biosynthesis of the cell wall peptidoglycan: transfers peptidoglycan precursor phospho-MurNAc-pentapeptide from UDP-MurNAc-pentapeptide onto the lipid carrier undecaprenyl phosphate, yielding undecaprenyl-pyrophosphoryl-MurNAc-pentapeptide, known as lipid I. In Caldanaerobacter subterraneus subsp. tengcongensis (strain DSM 15242 / JCM 11007 / NBRC 100824 / MB4) (Thermoanaerobacter tengcongensis), this protein is Phospho-N-acetylmuramoyl-pentapeptide-transferase.